Here is a 72-residue protein sequence, read N- to C-terminus: Probable protein transport protein Sec61 subunit gamma (72 aa).

The Cytoplasmic segment spans residues 1–40; that stretch reads MSQKLQKPSFLSEYLRSIRLFSKKCVRPSGKELSMSIKRH. A helical transmembrane segment spans residues 41–61; sequence AIGIGFLGILGYAIKLIHIPI. At 62 to 72 the chain is on the extracellular side; it reads NNIIVSSPGKE.

It belongs to the SecE/SEC61-gamma family. In terms of assembly, heterotrimeric complex composed of SEC61-alpha, SEC61-beta and SEC61-gamma.

Its subcellular location is the endoplasmic reticulum membrane. In terms of biological role, necessary for protein translocation in the endoplasmic reticulum. This Encephalitozoon cuniculi (strain GB-M1) (Microsporidian parasite) protein is Probable protein transport protein Sec61 subunit gamma.